We begin with the raw amino-acid sequence, 450 residues long: Exodeoxyribonuclease 7 large subunit (450 aa).

The protein belongs to the XseA family. In terms of assembly, heterooligomer composed of large and small subunits.

It is found in the cytoplasm. The enzyme catalyses Exonucleolytic cleavage in either 5'- to 3'- or 3'- to 5'-direction to yield nucleoside 5'-phosphates.. Functionally, bidirectionally degrades single-stranded DNA into large acid-insoluble oligonucleotides, which are then degraded further into small acid-soluble oligonucleotides. This Listeria monocytogenes serovar 1/2a (strain ATCC BAA-679 / EGD-e) protein is Exodeoxyribonuclease 7 large subunit.